Reading from the N-terminus, the 488-residue chain is Phenylalanine--tRNA ligase alpha subunit (488 aa).

L-phenylalanine-binding positions include Thr-332, Gln-371–Asp-373, and Phe-410. Glu-412 is a Mg(2+) binding site. Phe-435 serves as a coordination point for L-phenylalanine.

Belongs to the class-II aminoacyl-tRNA synthetase family. Phe-tRNA synthetase alpha subunit type 2 subfamily. As to quaternary structure, tetramer of two alpha and two beta subunits. Mg(2+) serves as cofactor.

The protein resides in the cytoplasm. The enzyme catalyses tRNA(Phe) + L-phenylalanine + ATP = L-phenylalanyl-tRNA(Phe) + AMP + diphosphate + H(+). The polypeptide is Phenylalanine--tRNA ligase alpha subunit (Aeropyrum pernix (strain ATCC 700893 / DSM 11879 / JCM 9820 / NBRC 100138 / K1)).